Here is a 78-residue protein sequence, read N- to C-terminus: MTTKMFSYVLLHSLMMFAIILSSMGSPEKYYDCKQDGCITTPPCWRKCVSMGYPKGGECRIYSYGGVCCCDLTSKPPN.

A signal peptide spans 1–25 (MTTKMFSYVLLHSLMMFAIILSSMG). 4 cysteine pairs are disulfide-bonded: Cys33–Cys70, Cys38–Cys59, Cys44–Cys68, and Cys48–Cys69.

Belongs to the DEFL family.

It is found in the secreted. This Arabidopsis thaliana (Mouse-ear cress) protein is Defensin-like protein 90.